Consider the following 157-residue polypeptide: F-box protein SNE (157 aa).

An F-box domain is found at 24 to 70 (PVFSINDHHDVLVEILRRLDGSSLCSAACVCRLWSAVARNDSIWEEL).

As to quaternary structure, part of a SCF (ASK-cullin-F-box) protein ligase complex. Interacts directly with SKP1A and SKP1B. Highly expressed in flowers and at much lower level in seedlings, rosette leaves and green siliques.

It is found in the nucleus. It participates in protein modification; protein ubiquitination. In terms of biological role, essential component of a SCF-type E3 ligase complex that positively regulates the gibberellin signaling pathway. Upon gibberellin treatment, such complex probably mediates the ubiquitination and subsequent degradation of DELLA proteins (GAI, RGA and RGL2), some repressors of the gibberellin pathway, leading to activate the pathway. Can partially complement the absence of GID2/SLY1. The sequence is that of F-box protein SNE (SNE) from Arabidopsis thaliana (Mouse-ear cress).